Reading from the N-terminus, the 1241-residue chain is DNA-directed RNA polymerase subunit beta (1241 aa).

Positions 1195 to 1219 (PQDVQENVSGENVDAGYENEDVDID) are disordered.

It belongs to the RNA polymerase beta chain family. In terms of assembly, the RNAP catalytic core consists of 2 alpha, 1 beta, 1 beta' and 1 omega subunit. When a sigma factor is associated with the core the holoenzyme is formed, which can initiate transcription.

It catalyses the reaction RNA(n) + a ribonucleoside 5'-triphosphate = RNA(n+1) + diphosphate. In terms of biological role, DNA-dependent RNA polymerase catalyzes the transcription of DNA into RNA using the four ribonucleoside triphosphates as substrates. The sequence is that of DNA-directed RNA polymerase subunit beta from Clostridium acetobutylicum (strain ATCC 824 / DSM 792 / JCM 1419 / IAM 19013 / LMG 5710 / NBRC 13948 / NRRL B-527 / VKM B-1787 / 2291 / W).